Here is a 152-residue protein sequence, read N- to C-terminus: Lipoprotein signal peptidase (152 aa).

2 helical membrane passes run 55–75 (NKMW…VFYM) and 85–105 (LGIS…DRVF). Catalysis depends on residues aspartate 111 and aspartate 129. Residues 124-144 (VFNIADSALCIGVVLIIIQTV) form a helical membrane-spanning segment.

The protein belongs to the peptidase A8 family.

Its subcellular location is the cell membrane. The enzyme catalyses Release of signal peptides from bacterial membrane prolipoproteins. Hydrolyzes -Xaa-Yaa-Zaa-|-(S,diacylglyceryl)Cys-, in which Xaa is hydrophobic (preferably Leu), and Yaa (Ala or Ser) and Zaa (Gly or Ala) have small, neutral side chains.. It participates in protein modification; lipoprotein biosynthesis (signal peptide cleavage). This protein specifically catalyzes the removal of signal peptides from prolipoproteins. This chain is Lipoprotein signal peptidase, found in Bacillus mycoides (strain KBAB4) (Bacillus weihenstephanensis).